Reading from the N-terminus, the 143-residue chain is Small ribosomal subunit protein uS12 (143 aa).

Pro62 bears the Hydroxyproline mark.

Belongs to the universal ribosomal protein uS12 family. As to quaternary structure, component of the 40S small ribosomal subunit.

The protein localises to the cytoplasm. It localises to the cytosol. It is found in the rough endoplasmic reticulum. This chain is Small ribosomal subunit protein uS12 (RPS23), found in Ciona intestinalis (Transparent sea squirt).